Reading from the N-terminus, the 1632-residue chain is MSNNKQTAAPAATSNEKAENGAEKEAIEKFVEVVRNTPELQGEMFFDGCIIAMTKDAFKGKYRVFYGNGLHTSIMFGAGTAALDLMTPGSFLPPFPQRLIKSREGSAPTMEATDPMMSRVIILMNGECLDVNSELINRPKTMGDDAISNLTDDLNNITPKEGEATVKEWDSLPGGELRYLSKANKPDETYMKDLIEKYFEKAICHNGKKVEDYVFFLVANPIAMVSLARKGFMSNVNMHNYESFENNIVIPADDDELYFGDHTFKVAVNNERLNTSSVANCNAYVRPFFHGCNGFYQGRNKRIYPESHDLYRRDYIKDYNTDYKSLCYSRKTENVMPVCDFISSTAATLVLQKFPLNYVIEHKFTTEDDDYKTKMAMSVKLDLIKEIAIKNRYRPNVFDDNFHVSQDRIYATKYQGHLERNTISPNALHTYKTGGKLGIAGELMEGEKMSQWVHTDIASKFTSMENFNKNGGDEAALCDDEEKELGFGKMYVTSRLSSVFDFKSIFNANRMTTQHELSSQLGDTDTKKEQKEKRSKQGGSKLFNYKIKSAFNPVFNSLKSPAQKILFNMCGDRTLFKSVMEDALFLLRDEIFLEDKLVMTHPAFAESENPNHCQYCKCSFNNGMAGVENKDFCFCYLILRTMCALSAREPTQFNITNLWDKTAFPSELPPTTTETFDYNFNMNVRTIERKNKCSAYGNAVLTDSERENGFADPNLKEENGSKKKLQSYMKEVKLEALIKAVLTAEPTLLHPDQRINMDKITEGDEFYHKLEANRFAKSMGYKQDFTMGSIGPDETPNGSYQLSSIKSIRDVLLKDSKSSVDYELNKFIVVPGKMTHTIKGTKKSDDGDSKTDGSGDMEDDFTSLAKMTNRKRKAGGKDGPSKKKKKDGADKSLEKLARAMLLDLLEISIPNSDASLSLEEQNQEIRKFWREKQIHPDYIFLFPNAEEKRKLTPETTKQLCQKFMKVVGICRDMIRPEPTSSENIRLKLVTTYMAGVRDYIKRLAEFLAKKLNYSSVEEMRGYAMSSIRMKNESVKKTQSSWMDPQSTSDPVQKMMERKITSAYATHRIESANTKVLPYTDSKLIPVCSEIPIPARMILCSVGETESDGCKRLGYNIEGYKRNEKDIKMAGEKQQPHSYLTPLEMKIKMDTFQKEAENIEKEKYVDGNKPETAAREEIFKQVREKEINCGVYIPWEIMAKDLCENAGYKDSDVLDPAVLAHILKRADVKFEKLGNGGFASALNCKTIAKLLAGYLDTMEDVNVTRPSLITNIFSDMDTICSMVNKIGMNMKSFFGSYDYATFDMATFNLKDTLLKMISQEPELGSVLHLLITMATIYGVNTSTNGKLFYKSYERDSQAAVVGIGGILNIFLGMDACKSSNAAREIKQAQRKINPMITTHMDYNMKRGGGIDRWSTLDTAKCQGMSRYLGCYSFSTYPGQQGSNDIYTKLKLSGGFFYNSIPAHICAQSKSHNTNKVTMCLKNSGVLYSSFKRGGRNVDIAELLNRGDLDDINNTILSTNGLAQKIAAYFLSSIGIEPKTNGFPDMGNMSKSMFVRKIVKIHFSEFAEEDGEIMVERKVLKHILGFVYPDDSVVEKPDMFMVYDPSAMDVDEDEDEDMDDESDDESDGEEMSGE.

Residues 1–15 (MSNNKQTAAPAATSN) are compositionally biased toward polar residues. Positions 1–23 (MSNNKQTAAPAATSNEKAENGAE) are disordered. The Cytoplasmic segment spans residues 1-63 (MSNNKQTAAP…TKDAFKGKYR (63 aa)). Residues 64–86 (VFYGNGLHTSIMFGAGTAALDLM) traverse the membrane as a helical segment. The Extracellular portion of the chain corresponds to 87–1632 (TPGSFLPPFP…ESDGEEMSGE (1546 aa)). N-linked (GlcNAc...) asparagine; by host glycans are attached at residues N149 and N274. The disordered stretch occupies residues 516 to 538 (ELSSQLGDTDTKKEQKEKRSKQG). Residues N654, N719, and N797 are each glycosylated (N-linked (GlcNAc...) asparagine; by host). The disordered stretch occupies residues 838–890 (IKGTKKSDDGDSKTDGSGDMEDDFTSLAKMTNRKRKAGGKDGPSKKKKKDGAD). 2 stretches are compositionally biased toward basic and acidic residues: residues 842–853 (KKSDDGDSKTDG) and 875–890 (GGKD…DGAD). 6 N-linked (GlcNAc...) asparagine; by host glycosylation sites follow: N1012, N1031, N1261, N1339, N1511, and N1546. A disordered region spans residues 1603–1632 (PSAMDVDEDEDEDMDDESDDESDGEEMSGE). Over residues 1607–1632 (DVDEDEDEDMDDESDDESDGEEMSGE) the composition is skewed to acidic residues.

It localises to the host membrane. This is an uncharacterized protein from Ostreid herpesvirus 1 (isolate France) (OsHV-1).